Reading from the N-terminus, the 137-residue chain is Proofreading thioesterase EntH (137 aa).

Residue Glu63 is the Nucleophile or proton acceptor of the active site.

Belongs to the thioesterase PaaI family. Homotetramer. Dimer of dimers. Interacts specifically with the aryl carrier protein (ArCP) domain of EntB.

It is found in the cytoplasm. Its pathway is siderophore biosynthesis; enterobactin biosynthesis. Functionally, required for optimal enterobactin synthesis. Acts as a proofreading enzyme that prevents EntB misacylation by hydrolyzing the thioester bound existing between EntB and wrongly charged molecules. The chain is Proofreading thioesterase EntH (entH) from Klebsiella pneumoniae subsp. pneumoniae (strain ATCC 700721 / MGH 78578).